A 955-amino-acid polypeptide reads, in one-letter code: Protein MEI2-like 3 (955 aa).

Positions 64–83 are disordered; it reads IQPNGANHAGDPETPGGQAF. 2 RRM domains span residues 270 to 343 and 355 to 428; these read RTLV…FSFP and GMLV…LSQH. Disordered stretches follow at residues 436-465 and 897-955; these read RQQHSREWKQDSLPHQPKNSSPGTIGKLGT and NAGD…LEQT. Polar residues predominate over residues 935 to 955; sequence DQESNSVGTANSTCRTTLEQT.

Probable RNA-binding protein that may play a role in growth regulation. This Oryza sativa subsp. japonica (Rice) protein is Protein MEI2-like 3 (ML3).